The chain runs to 268 residues: Tryptophan synthase alpha chain (268 aa).

Catalysis depends on proton acceptor residues E49 and D60.

This sequence belongs to the TrpA family. Tetramer of two alpha and two beta chains.

The catalysed reaction is (1S,2R)-1-C-(indol-3-yl)glycerol 3-phosphate + L-serine = D-glyceraldehyde 3-phosphate + L-tryptophan + H2O. Its pathway is amino-acid biosynthesis; L-tryptophan biosynthesis; L-tryptophan from chorismate: step 5/5. Functionally, the alpha subunit is responsible for the aldol cleavage of indoleglycerol phosphate to indole and glyceraldehyde 3-phosphate. In Yersinia pseudotuberculosis serotype O:3 (strain YPIII), this protein is Tryptophan synthase alpha chain.